The primary structure comprises 485 residues: Argininosuccinate lyase (485 aa).

Belongs to the lyase 1 family. Argininosuccinate lyase subfamily.

The protein resides in the cytoplasm. It carries out the reaction 2-(N(omega)-L-arginino)succinate = fumarate + L-arginine. It participates in amino-acid biosynthesis; L-arginine biosynthesis; L-arginine from L-ornithine and carbamoyl phosphate: step 3/3. The sequence is that of Argininosuccinate lyase from Halobacterium salinarum (strain ATCC 29341 / DSM 671 / R1).